Here is a 1463-residue protein sequence, read N- to C-terminus: Nucleoporin NUP152 (1463 aa).

3 disordered regions span residues 1-199, 339-568, and 609-1064; these read MDPP…GRPG, GIPD…ELPA, and TTKK…FGNT. Composition is skewed to polar residues over residues 32–42, 81–92, 144–155, 175–191, 367–378, and 416–472; these read STNSNSVTANA, GPSSKLSQSVSA, TSSKATSFSGAP, TTYTQRVSSHPLTQSFP, PSSSTFTHTASP, and PAKT…SSNI. The span at 481 to 498 shows a compositional bias: acidic residues; the sequence is KDEDNESDTGSEAEAEDE. 2 stretches are compositionally biased toward low complexity: residues 511-523 and 616-630; these read GASSSAPSEGGES and AAAPAEAPKEATPTT. 3 stretches are compositionally biased toward polar residues: residues 651 to 664, 673 to 689, and 720 to 746; these read IFGSTTNPTETSIP, PATSTTNSLFGATTSAA, and TTESPKTNLFQFGTPNKTETAPATQPQ. Residues 729 to 732 form an FXFG 1 repeat; it reads FQFG. Low complexity predominate over residues 753 to 768; that stretch reads KPPSTETPTEKPATTS. Residues 777–789 are compositionally biased toward polar residues; sequence PATTSSLFGSATT. The segment covering 803–813 has biased composition (low complexity); it reads TTTPADKPTTT. Over residues 814-828 the composition is skewed to polar residues; the sequence is NLFGSTSTQATSGSD. The stretch at 835-838 is one FXFG 2 repeat; sequence FAFG. Residues 840–863 are compositionally biased toward polar residues; it reads TTESKPTTSLFGSTTPAPATSTEN. Over residues 870 to 881 the composition is skewed to low complexity; the sequence is ATTTSATPATNT. 5 stretches are compositionally biased toward polar residues: residues 900–923, 940–961, 968–987, 998–1029, and 1037–1055; these read GSSTTTAAPVFQFGSTPASTSTEQ, GSTSATSTEQKPLFGSSTTMTE, SISTTATEQKPLFGSTSTTE, STEQKSLFGITPSTTENNPASIFGNSSTSTEQ, and PASTEQKPLFGSTPSTTEN. One copy of the FXFG 3 repeat lies at 910–913; sequence FQFG. FXFG repeat units follow at residues 1074-1077, 1127-1130, 1141-1144, and 1152-1155; these read FNFG and FTFG. 2 disordered regions span residues 1155–1174 and 1179–1217; these read GASSDSSNASNNASSAPIFS and QPSSTPLFGQNNPPAASNIFASSLAPVGGTSTGTSKHVP. Over residues 1156–1170 the composition is skewed to low complexity; the sequence is ASSDSSNASNNASSA. Residues 1173–1176 form an FXFG 8 repeat; sequence FSFG. The span at 1179–1199 shows a compositional bias: polar residues; it reads QPSSTPLFGQNNPPAASNIFA. One copy of the FXFG 9 repeat lies at 1236 to 1239; the sequence is FTFG. The segment covering 1240–1271 has biased composition (low complexity); the sequence is GASSLATTPAASTPEPSAANAAAAGEDQGASA. Disordered regions lie at residues 1240-1335 and 1416-1463; these read GASS…PWKV and AALE…DEKK. Positions 1289–1427 constitute a RanBD1 domain; that stretch reads GEEDESVVHE…LEEHKKANEK (139 aa). The span at 1418-1463 shows a compositional bias: basic and acidic residues; sequence LEEHKKANEKKDGEKNEESEKKDEKQEEKKNEEKKDEKEEKKDEKK.

The nuclear pore complex (NPC) constitutes the exclusive means of nucleocytoplasmic transport. NPCs allow the passive diffusion of ions and small molecules and the active, nuclear transport receptor-mediated bidirectional transport of macromolecules such as proteins, RNAs, ribonucleoparticles (RNPs), and ribosomal subunits across the nuclear envelope. The 55-60 MDa NPC is composed of at least 28 different subunits: AMO1, ELYS, GLE1, GLE2, MLP1, NDC1, NIC96, NSP1, NUP133, NUP145, NUP152, NUP159, NUP170, NUP188, NUP192, NUP37, NUP49, NUP53, NUP56, NUP57, NUP82, NUP84, NUP85, POM152, POM33, POM34, SEC13 and SEH1. Due to its 8-fold rotational symmetry, all subunits are present with 8 copies or multiples thereof.

Its subcellular location is the nucleus. It is found in the nuclear pore complex. It localises to the nucleus membrane. Functions as a component of the nuclear pore complex (NPC). NPC components, collectively referred to as nucleoporins (NUPs), can play the role of both NPC structural components and of docking or interaction partners for transiently associated nuclear transport factors. Active directional transport is assured by both, a Phe-Gly (FG) repeat affinity gradient for these transport factors across the NPC and a transport cofactor concentration gradient across the nuclear envelope (GSP1 and GSP2 GTPases associated predominantly with GTP in the nucleus, with GDP in the cytoplasm). The sequence is that of Nucleoporin NUP152 (NUP152) from Chaetomium thermophilum (strain DSM 1495 / CBS 144.50 / IMI 039719) (Thermochaetoides thermophila).